We begin with the raw amino-acid sequence, 559 residues long: MADGDYFAEAARAVGCPHAPVPGLGLGPPLGWKERLKAGLANSGSTLWFLAGLGLLYALRVPLRLCDNVTAVTGFLSSLTPKFYVALTGTSSLISGLIFIFEWWYFHKHGTSFIEQVSISHLRPLMGGTESSISEPGSPANSRESETLRHHHLSECKVWRNPLNLFRGAEYRRYTWVTGKEPLTYYDMNLSAQDHQTFFTCETDFLRPSDTVMQKAWRERNPPARIKAAYQALELNNDCATAYVLLAEEEATTIVDAERLFKQALRAGEIIYRRSQQCQHQSPQHEAQLRRDTNVLVYIKRRLAMCARKLGRIREAVKIMRDLMKEFPPLTMLNIHENLLESLLELQAYADVQAVLAKYDDISLPKSAAICYTAALLKTRTVSDKFSPETAFRKGLSTAEINAVEAIHRAVEFNPHVPKYLLEMKSLILPPEHILKRGDSEAIAYAFFHLQHWKRIEGALNLLQCTWEGTFRMIPYPLEKGHLFYPYPSCTETADRELLPTFHHVSVYPKKELPFFIHFTAGLCSSTAMLAFLTHQFPEVMGVFAKAVSMISRTCVEYL.

The next 3 membrane-spanning stretches (helical) occupy residues 39–59 (GLAN…LYAL), 83–103 (FYVA…IFEW), and 513–533 (LPFF…LAFL).

Belongs to the ST7 family. As to expression, ubiquitously expressed.

The protein localises to the membrane. The protein is Suppressor of tumorigenicity 7 protein-like (St7l) of Mus musculus (Mouse).